The chain runs to 235 residues: Pyridoxine/pyridoxamine 5'-phosphate oxidase (235 aa).

Substrate-binding positions include 30-33 and lysine 88; that span reads RQEY. FMN is bound by residues 83–88, 98–99, arginine 104, lysine 105, and glutamine 127; these read RTVLLK and YT. Substrate contacts are provided by tyrosine 145, arginine 149, and serine 153. FMN contacts are provided by residues 162 to 163 and tryptophan 207; that span reads QS. 213–215 contributes to the substrate binding site; the sequence is RLH. Arginine 217 provides a ligand contact to FMN.

It belongs to the pyridoxamine 5'-phosphate oxidase family. Homodimer. FMN is required as a cofactor.

It catalyses the reaction pyridoxamine 5'-phosphate + O2 + H2O = pyridoxal 5'-phosphate + H2O2 + NH4(+). The enzyme catalyses pyridoxine 5'-phosphate + O2 = pyridoxal 5'-phosphate + H2O2. Its pathway is cofactor metabolism; pyridoxal 5'-phosphate salvage; pyridoxal 5'-phosphate from pyridoxamine 5'-phosphate: step 1/1. It participates in cofactor metabolism; pyridoxal 5'-phosphate salvage; pyridoxal 5'-phosphate from pyridoxine 5'-phosphate: step 1/1. Catalyzes the oxidation of either pyridoxine 5'-phosphate (PNP) or pyridoxamine 5'-phosphate (PMP) into pyridoxal 5'-phosphate (PLP). The polypeptide is Pyridoxine/pyridoxamine 5'-phosphate oxidase (Bacteroides fragilis (strain YCH46)).